A 387-amino-acid polypeptide reads, in one-letter code: Zinc finger protein neuro-d4 (387 aa).

Glycyl lysine isopeptide (Lys-Gly) (interchain with G-Cter in SUMO2) cross-links involve residues lysine 106, lysine 129, and lysine 133. The segment at 195–218 (YVCDICGKRYKNRPGLSYHYTHTH) adopts a C2H2-type zinc-finger fold. 2 consecutive PHD-type zinc fingers follow at residues 271 to 328 (NGYC…CKSC) and 325 to 375 (CKSC…CLRH). Residues cysteine 274, cysteine 277, cysteine 293, cysteine 296, histidine 301, cysteine 304, cysteine 322, cysteine 325, cysteine 328, cysteine 331, cysteine 343, cysteine 346, histidine 351, cysteine 354, cysteine 369, and cysteine 372 each coordinate Zn(2+).

This sequence belongs to the requiem/DPF family. In terms of assembly, component of neuron-specific chromatin remodeling complex (nBAF complex) composed of at least, ARID1A/BAF250A or ARID1B/BAF250B, SMARCD1/BAF60A, SMARCD3/BAF60C, SMARCA2/BRM/BAF190B, SMARCA4/BRG1/BAF190A, SMARCB1/BAF47, SMARCC1/BAF155, SMARCE1/BAF57, SMARCC2/BAF170, DPF1/BAF45B, DPF3/BAF45C, ACTL6B/BAF53B and actin.

The protein localises to the cytoplasm. It localises to the nucleus. In terms of biological role, may have an important role in developing neurons by participating in regulation of cell survival, possibly as a neurospecific transcription factor. Belongs to the neuron-specific chromatin remodeling complex (nBAF complex). During neural development a switch from a stem/progenitor to a postmitotic chromatin remodeling mechanism occurs as neurons exit the cell cycle and become committed to their adult state. The transition from proliferating neural stem/progenitor cells to postmitotic neurons requires a switch in subunit composition of the npBAF and nBAF complexes. As neural progenitors exit mitosis and differentiate into neurons, npBAF complexes which contain ACTL6A/BAF53A and PHF10/BAF45A, are exchanged for homologous alternative ACTL6B/BAF53B and DPF1/BAF45B or DPF3/BAF45C subunits in neuron-specific complexes (nBAF). The npBAF complex is essential for the self-renewal/proliferative capacity of the multipotent neural stem cells. The nBAF complex along with CREST plays a role regulating the activity of genes essential for dendrite growth. This is Zinc finger protein neuro-d4 from Homo sapiens (Human).